A 398-amino-acid polypeptide reads, in one-letter code: Dual-specificity RNA methyltransferase RlmN (398 aa).

The active-site Proton acceptor is Glu-119. The region spanning 125 to 364 is the Radical SAM core domain; sequence EADRATLCVS…TIVRKTRGDD (240 aa). An intrachain disulfide couples Cys-132 to Cys-369. Residues Cys-139, Cys-143, and Cys-146 each contribute to the [4Fe-4S] cluster site. S-adenosyl-L-methionine contacts are provided by residues 193-194, Ser-225, 247-249, and Asn-326; these read GE and SLH. The active-site S-methylcysteine intermediate is the Cys-369.

The protein belongs to the radical SAM superfamily. RlmN family. Requires [4Fe-4S] cluster as cofactor.

It localises to the cytoplasm. It catalyses the reaction adenosine(2503) in 23S rRNA + 2 reduced [2Fe-2S]-[ferredoxin] + 2 S-adenosyl-L-methionine = 2-methyladenosine(2503) in 23S rRNA + 5'-deoxyadenosine + L-methionine + 2 oxidized [2Fe-2S]-[ferredoxin] + S-adenosyl-L-homocysteine. The catalysed reaction is adenosine(37) in tRNA + 2 reduced [2Fe-2S]-[ferredoxin] + 2 S-adenosyl-L-methionine = 2-methyladenosine(37) in tRNA + 5'-deoxyadenosine + L-methionine + 2 oxidized [2Fe-2S]-[ferredoxin] + S-adenosyl-L-homocysteine. In terms of biological role, specifically methylates position 2 of adenine 2503 in 23S rRNA and position 2 of adenine 37 in tRNAs. m2A2503 modification seems to play a crucial role in the proofreading step occurring at the peptidyl transferase center and thus would serve to optimize ribosomal fidelity. In Yersinia pestis, this protein is Dual-specificity RNA methyltransferase RlmN.